We begin with the raw amino-acid sequence, 630 residues long: Chaperone protein DnaK (630 aa).

Threonine 197 is subject to Phosphothreonine; by autocatalysis. A compositionally biased stretch (polar residues) spans 604–618; the sequence is KNNESVKNNESVKNN. The interval 604–630 is disordered; it reads KNNESVKNNESVKNNESVKDVDFEEIK. The span at 619–630 shows a compositional bias: basic and acidic residues; it reads ESVKDVDFEEIK.

Belongs to the heat shock protein 70 family.

Its function is as follows. Acts as a chaperone. In Karelsulcia muelleri (strain GWSS) (Sulcia muelleri), this protein is Chaperone protein DnaK.